The sequence spans 164 residues: MQTPKLAILLALAMAAAMVNLSQAQNSPQDYVSPHNAARSAVGVGAVSWSTKLQAFAQNYANQRINDCKLQHSGGPYGENIFWGSAGADWKAADAVNSWVNEKKDYNYGSNTCAAGKVCGHYTQVVWRASTSIGCARVVCNNNRGVFITCNYEPRGNIVGQKPY.

The signal sequence occupies residues 1 to 24; that stretch reads MQTPKLAILLALAMAAAMVNLSQA. Glutamine 25 is subject to Pyrrolidone carboxylic acid. The SCP domain maps to 34-152; that stretch reads PHNAARSAVG…NRGVFITCNY (119 aa). Intrachain disulfides connect cysteine 68–cysteine 140, cysteine 113–cysteine 119, and cysteine 135–cysteine 150.

This sequence belongs to the CRISP family.

Its function is as follows. Probably involved in the defense reaction of plants against pathogens. The polypeptide is Pathogenesis-related protein PRB1-2 (Hordeum vulgare (Barley)).